A 449-amino-acid polypeptide reads, in one-letter code: Cryptochrome DASH (449 aa).

One can recognise a Photolyase/cryptochrome alpha/beta domain in the interval 15–147 (RLGLFVFRND…PFHETPNNTL (133 aa)).

It belongs to the DNA photolyase class-1 family. The cofactor is FAD. Requires (6R)-5,10-methylene-5,6,7,8-tetrahydrofolate as cofactor.

Its function is as follows. May have a photoreceptor function. Binds DNA; probably functions as a transcriptional repressor. The chain is Cryptochrome DASH (cry) from Idiomarina loihiensis (strain ATCC BAA-735 / DSM 15497 / L2-TR).